The following is a 333-amino-acid chain: Holliday junction branch migration complex subunit RuvB (333 aa).

Residues 1 to 182 are large ATPase domain (RuvB-L); sequence MDERLLSQSH…FGVTLKLEYY (182 aa). ATP is bound by residues L21, R22, G63, K66, T67, T68, 129-131, R172, Y182, and R219; that span reads EDY. T67 lines the Mg(2+) pocket. Residues 183-253 are small ATPAse domain (RuvB-S); that stretch reads ETHELAAIVS…LASDALDRLH (71 aa). The interval 256 to 333 is head domain (RuvB-H); sequence ALGLDEVDHR…SHFGYEEEEE (78 aa). Residues R311 and R316 each coordinate DNA.

It belongs to the RuvB family. In terms of assembly, homohexamer. Forms an RuvA(8)-RuvB(12)-Holliday junction (HJ) complex. HJ DNA is sandwiched between 2 RuvA tetramers; dsDNA enters through RuvA and exits via RuvB. An RuvB hexamer assembles on each DNA strand where it exits the tetramer. Each RuvB hexamer is contacted by two RuvA subunits (via domain III) on 2 adjacent RuvB subunits; this complex drives branch migration. In the full resolvosome a probable DNA-RuvA(4)-RuvB(12)-RuvC(2) complex forms which resolves the HJ.

It localises to the cytoplasm. The catalysed reaction is ATP + H2O = ADP + phosphate + H(+). Its function is as follows. The RuvA-RuvB-RuvC complex processes Holliday junction (HJ) DNA during genetic recombination and DNA repair, while the RuvA-RuvB complex plays an important role in the rescue of blocked DNA replication forks via replication fork reversal (RFR). RuvA specifically binds to HJ cruciform DNA, conferring on it an open structure. The RuvB hexamer acts as an ATP-dependent pump, pulling dsDNA into and through the RuvAB complex. RuvB forms 2 homohexamers on either side of HJ DNA bound by 1 or 2 RuvA tetramers; 4 subunits per hexamer contact DNA at a time. Coordinated motions by a converter formed by DNA-disengaged RuvB subunits stimulates ATP hydrolysis and nucleotide exchange. Immobilization of the converter enables RuvB to convert the ATP-contained energy into a lever motion, pulling 2 nucleotides of DNA out of the RuvA tetramer per ATP hydrolyzed, thus driving DNA branch migration. The RuvB motors rotate together with the DNA substrate, which together with the progressing nucleotide cycle form the mechanistic basis for DNA recombination by continuous HJ branch migration. Branch migration allows RuvC to scan DNA until it finds its consensus sequence, where it cleaves and resolves cruciform DNA. In Exiguobacterium sp. (strain ATCC BAA-1283 / AT1b), this protein is Holliday junction branch migration complex subunit RuvB.